Here is a 351-residue protein sequence, read N- to C-terminus: Methionine import ATP-binding protein MetN (351 aa).

The ABC transporter domain maps to 2–247 (ITTSGLTKVY…PGSELAAALF (246 aa)). 38–45 (GQSGAGKS) lines the ATP pocket.

It belongs to the ABC transporter superfamily. Methionine importer (TC 3.A.1.24) family. In terms of assembly, the complex is composed of two ATP-binding proteins (MetN), two transmembrane proteins (MetI) and a solute-binding protein (MetQ).

Its subcellular location is the cell membrane. The enzyme catalyses L-methionine(out) + ATP + H2O = L-methionine(in) + ADP + phosphate + H(+). The catalysed reaction is D-methionine(out) + ATP + H2O = D-methionine(in) + ADP + phosphate + H(+). Its function is as follows. Part of the ABC transporter complex MetNIQ involved in methionine import. Responsible for energy coupling to the transport system. In Streptomyces coelicolor (strain ATCC BAA-471 / A3(2) / M145), this protein is Methionine import ATP-binding protein MetN.